The chain runs to 117 residues: Ig heavy chain V region 186-1 (117 aa).

Positions 1–19 are cleaved as a signal peptide; it reads MGWSCIMLFLAATATGVHS. A framework-1 region spans residues 20-49; the sequence is QVQLQQPGAELVKPGASVKLSCKASGYTFT. The cysteines at positions 41 and 115 are disulfide-linked. Residues 50 to 54 form a complementarity-determining-1 region; that stretch reads SYWMH. The framework-2 stretch occupies residues 55–68; that stretch reads WVKQRPGRGLEWIG. A complementarity-determining-2 region spans residues 69-85; it reads RIDPNSGGTKYNEKFKS. The interval 86–117 is framework-3; that stretch reads KATLTVDTSSSTAYMQLHSLTSEDSAVYYCAR.

The polypeptide is Ig heavy chain V region 186-1 (Mus musculus (Mouse)).